Here is a 600-residue protein sequence, read N- to C-terminus: Proton channel OTOP1 (600 aa).

A disordered region spans residues 1–50 (MPGDRGALSSPAASSGSPSAAPSGIAACPPPPSPLARASPQASGPRRGAS). The Cytoplasmic segment spans residues 1–56 (MPGDRGALSSPAASSGSPSAAPSGIAACPPPPSPLARASPQASGPRRGASVPQKLA). Positions 7 to 27 (ALSSPAASSGSPSAAPSGIAA) are enriched in low complexity. Residues 57 to 78 (ETLSSQYGLNVFVAGLLFLLAW) form a helical membrane-spanning segment. The Extracellular portion of the chain corresponds to 79–86 (AVHATGVG). A helical transmembrane segment spans residues 87 to 110 (KSDLLCVLTALMLLQLLWMLWYVG). Residues 111–128 (RSYMQRRLIRPKDTHAGA) are Cytoplasmic-facing. The helical transmembrane segment at 129 to 151 (RWLRGSITLFAFITIVLGCLKVA) threads the bilayer. The Extracellular segment spans residues 152–161 (YFIGFSECLS). The helical transmembrane segment at 162-186 (ATEGVFPVTHAVHTLLQVYFLWGHA) threads the bilayer. The Cytoplasmic portion of the chain corresponds to 187 to 194 (KDIIMSFK). The chain crosses the membrane as a helical span at residues 195-221 (TLERFGVIHSVFTNLLLWANSVLNESK). Residues 222 to 262 (HQLNEHKERLITLGFGNITIVLDDHTPQCNCTPPALCSALS) lie on the Extracellular side of the membrane. Residues 263 to 288 (HGIYYLYPFNIEYQILASTMLYVLWK) traverse the membrane as a helical segment. At 289–309 (NIGRRVDSSRHQKMQCRFDGV) the chain is on the cytoplasmic side. Residues 310–332 (LVGSVLGLTVLAATIAVVVVYMI) traverse the membrane as a helical segment. Residues 333–342 (HIGRSKSKSE) lie on the Extracellular side of the membrane. A helical membrane pass occupies residues 343–368 (SALIMFYLYAITVLLLMGAAGLVGSW). At 369–386 (IYRVDEKSLDESKNPARK) the chain is on the cytoplasmic side. Residues 387–411 (LDADLLVATASGSWLLSWGSILAIA) traverse the membrane as a helical segment. Residues 412 to 421 (CAETRPPYTW) are Extracellular-facing. Residues 422-442 (YNLPYSVLVIVEKYVQNIFII) traverse the membrane as a helical segment. Residues 443–532 (ESVHLEPEGV…QGGMKRRLLR (90 aa)) are Cytoplasmic-facing. Residues 533–551 (NITAFLFLCNISLWIPPAF) traverse the membrane as a helical segment. Over 552–569 (GCRPEYDNGLEEIVFGFE) the chain is Extracellular. The helical transmembrane segment at 570-593 (PWIIVVNLAMPFSIFYRMHAAAAL) threads the bilayer. Topologically, residues 594 to 600 (FEVYCKI) are cytoplasmic.

This sequence belongs to the otopetrin family. As to quaternary structure, homodimer. Interacts with STAT1, independently of STAT1 phosphorylation status.

The protein resides in the cell membrane. Its subcellular location is the cell projection. It localises to the microvillus. The enzyme catalyses H(+)(in) = H(+)(out). With respect to regulation, activated by both acid and alkali, with proton influx in response to extracellular acid and proton efflux during alkali stimulation. Inhibited by Zn(2+); this inhibition is thought to be pH-sensitive. Currents evoked in response to mild acid (pH 6.0) stimulus may also be mildly potentiated by exposure to Zn(2+). Activated by NH(4)Cl. Its function is as follows. Proton-selective ion channel. Biphasically modulated by acid and alkali, mediating proton influx and efflux in response to extracellular acid and base stimulation, respectively. Sour taste receptor, which carries inward currents in response to extracellular acidification. Sensor for ammonium chloride (NH(4)Cl) in taste receptor cells. NH(4)Cl acts by increasing the intracellular pH, thereby generating a driving force for proton entry through OTOP1 channel. Might also participate in alkaline sensation. Plays a role in the regulation of Ca(2+) flux in response to purigenic (ATP, ADP and UDP) stimuli, leading to increase in cytosolic Ca(2+) due to influx of extracellular calcium. May play this role by inhibiting P2Y purinoceptor-mediated Ca(2+) release in a Ca(2+)-dependent manner and promote an influx of Ca(2+) in response to ATP. Through this mechanism and possibly others, plays a role in the formation and function of calcium carbonate-based structures in the vestibular system of the inner ear, called otoconia, that sense gravity and linear acceleration. In obesity, may attenuate adipose tissue inflammation, through the negative regulation of IFNG signaling, hence may play an adaptive role in the maintainance of metabolic homeostasis. Following alkali activation, may also be permeable Na(+), K(+), Cs(+) and Li(+). The sequence is that of Proton channel OTOP1 from Rattus norvegicus (Rat).